Here is a 230-residue protein sequence, read N- to C-terminus: Protein UPS2, mitochondrial (230 aa).

The 175-residue stretch at 1 to 175 (MKLFQNSYDF…VLQVFSENWE (175 aa)) folds into the PRELI/MSF1 domain.

The protein belongs to the slowmo family. As to quaternary structure, interacts with MDM35.

Its subcellular location is the mitochondrion inner membrane. The protein resides in the mitochondrion intermembrane space. In terms of biological role, required for mitochondrial cristae morphogenesis and MGM1-processing. Controls the stability of mitochondrial phosphatidylethanolamine (PE). With UPS1, controls the level of cardiolipin in mitochondria. Cardiolipin is a unique phospholipid with four fatty acid chains and is present mainly in the mitochondrial inner membrane where it stabilizes the electron transport chain supercomplex between complexes III and IV through direct interaction of their subunits. This chain is Protein UPS2, mitochondrial (UPS2), found in Saccharomyces cerevisiae (strain ATCC 204508 / S288c) (Baker's yeast).